The following is a 419-amino-acid chain: UDP-N-acetylglucosamine 1-carboxyvinyltransferase (419 aa).

22 to 23 (KN) contributes to the phosphoenolpyruvate binding site. Residue Arg-92 coordinates UDP-N-acetyl-alpha-D-glucosamine. The active-site Proton donor is Cys-116. Position 116 is a 2-(S-cysteinyl)pyruvic acid O-phosphothioketal (Cys-116). Residues 121 to 125 (RPIDQ), Asp-305, and Ile-327 each bind UDP-N-acetyl-alpha-D-glucosamine.

It belongs to the EPSP synthase family. MurA subfamily.

It is found in the cytoplasm. The enzyme catalyses phosphoenolpyruvate + UDP-N-acetyl-alpha-D-glucosamine = UDP-N-acetyl-3-O-(1-carboxyvinyl)-alpha-D-glucosamine + phosphate. It participates in cell wall biogenesis; peptidoglycan biosynthesis. Cell wall formation. Adds enolpyruvyl to UDP-N-acetylglucosamine. This is UDP-N-acetylglucosamine 1-carboxyvinyltransferase from Trichlorobacter lovleyi (strain ATCC BAA-1151 / DSM 17278 / SZ) (Geobacter lovleyi).